A 226-amino-acid polypeptide reads, in one-letter code: NADH-quinone oxidoreductase subunit B 2 (226 aa).

[4Fe-4S] cluster is bound by residues Cys-37, Cys-38, Cys-103, and Cys-132.

This sequence belongs to the complex I 20 kDa subunit family. NDH-1 is composed of 14 different subunits. Subunits NuoB, C, D, E, F, and G constitute the peripheral sector of the complex. [4Fe-4S] cluster is required as a cofactor.

The protein localises to the cell membrane. The catalysed reaction is a quinone + NADH + 5 H(+)(in) = a quinol + NAD(+) + 4 H(+)(out). Its function is as follows. NDH-1 shuttles electrons from NADH, via FMN and iron-sulfur (Fe-S) centers, to quinones in the respiratory chain. The immediate electron acceptor for the enzyme in this species is believed to be a menaquinone. Couples the redox reaction to proton translocation (for every two electrons transferred, four hydrogen ions are translocated across the cytoplasmic membrane), and thus conserves the redox energy in a proton gradient. The polypeptide is NADH-quinone oxidoreductase subunit B 2 (Salinispora arenicola (strain CNS-205)).